A 341-amino-acid chain; its full sequence is Biotin synthase (341 aa).

A Radical SAM core domain is found at 40 to 267; sequence AEIQVSTLLS…RSMVRLSAGR (228 aa). 3 residues coordinate [4Fe-4S] cluster: Cys-55, Cys-59, and Cys-62. 4 residues coordinate [2Fe-2S] cluster: Cys-99, Cys-130, Cys-190, and Arg-262.

Belongs to the radical SAM superfamily. Biotin synthase family. Homodimer. It depends on [4Fe-4S] cluster as a cofactor. [2Fe-2S] cluster is required as a cofactor.

It catalyses the reaction (4R,5S)-dethiobiotin + (sulfur carrier)-SH + 2 reduced [2Fe-2S]-[ferredoxin] + 2 S-adenosyl-L-methionine = (sulfur carrier)-H + biotin + 2 5'-deoxyadenosine + 2 L-methionine + 2 oxidized [2Fe-2S]-[ferredoxin]. Its pathway is cofactor biosynthesis; biotin biosynthesis; biotin from 7,8-diaminononanoate: step 2/2. Catalyzes the conversion of dethiobiotin (DTB) to biotin by the insertion of a sulfur atom into dethiobiotin via a radical-based mechanism. The sequence is that of Biotin synthase from Xylella fastidiosa (strain M23).